The following is a 118-amino-acid chain: Small ribosomal subunit protein uS13 (118 aa).

The interval 92-118 (RRSLPVRGQRTKTNARTRKGPRKPIKK) is disordered.

This sequence belongs to the universal ribosomal protein uS13 family. Part of the 30S ribosomal subunit. Forms a loose heterodimer with protein S19. Forms two bridges to the 50S subunit in the 70S ribosome.

Located at the top of the head of the 30S subunit, it contacts several helices of the 16S rRNA. In the 70S ribosome it contacts the 23S rRNA (bridge B1a) and protein L5 of the 50S subunit (bridge B1b), connecting the 2 subunits; these bridges are implicated in subunit movement. Contacts the tRNAs in the A and P-sites. The polypeptide is Small ribosomal subunit protein uS13 (Acinetobacter baylyi (strain ATCC 33305 / BD413 / ADP1)).